Here is a 151-residue protein sequence, read N- to C-terminus: uncharacterized protein (151 aa).

The next 3 helical transmembrane spans lie at 14-34 (GAAL…YWLI), 45-65 (ISLV…GYLI), and 91-111 (VIVA…ASLI).

It is found in the cell membrane. This is an uncharacterized protein from Bacillus subtilis (strain 168).